Consider the following 153-residue polypeptide: 17.3 kDa class I heat shock protein (153 aa).

The region spanning Glu-39–Gly-153 is the sHSP domain.

The protein belongs to the small heat shock protein (HSP20) family. As to quaternary structure, forms oligomeric structures.

The protein localises to the cytoplasm. This chain is 17.3 kDa class I heat shock protein (HSP17.3-B), found in Glycine max (Soybean).